The chain runs to 439 residues: Proline--tRNA ligase (439 aa).

This sequence belongs to the class-II aminoacyl-tRNA synthetase family. ProS type 2 subfamily. As to quaternary structure, homodimer.

It is found in the cytoplasm. It catalyses the reaction tRNA(Pro) + L-proline + ATP = L-prolyl-tRNA(Pro) + AMP + diphosphate. Catalyzes the attachment of proline to tRNA(Pro) in a two-step reaction: proline is first activated by ATP to form Pro-AMP and then transferred to the acceptor end of tRNA(Pro). This Rhodopseudomonas palustris (strain BisB5) protein is Proline--tRNA ligase.